The following is a 403-amino-acid chain: 8-amino-7-oxononanoate synthase (403 aa).

R30 serves as a coordination point for substrate. Position 121 to 122 (121 to 122 (GY)) interacts with pyridoxal 5'-phosphate. H146 contacts substrate. Pyridoxal 5'-phosphate-binding residues include S192, H220, and T248. K251 carries the post-translational modification N6-(pyridoxal phosphate)lysine. T367 contacts substrate.

It belongs to the class-II pyridoxal-phosphate-dependent aminotransferase family. BioF subfamily. Homodimer. Pyridoxal 5'-phosphate is required as a cofactor.

It carries out the reaction 6-carboxyhexanoyl-[ACP] + L-alanine + H(+) = (8S)-8-amino-7-oxononanoate + holo-[ACP] + CO2. The protein operates within cofactor biosynthesis; biotin biosynthesis. Its function is as follows. Catalyzes the decarboxylative condensation of pimeloyl-[acyl-carrier protein] and L-alanine to produce 8-amino-7-oxononanoate (AON), [acyl-carrier protein], and carbon dioxide. This is 8-amino-7-oxononanoate synthase from Burkholderia vietnamiensis (strain G4 / LMG 22486) (Burkholderia cepacia (strain R1808)).